Here is a 66-residue protein sequence, read N- to C-terminus: Regulator of G-protein signaling 11 (66 aa).

The RGS domain maps to 1-66 (EACEELRFGG…DAAQLHIYML (66 aa)).

In terms of assembly, heterodimer with Gbeta5. Interacts with RGS7BP, leading to regulate the subcellular location of the heterodimer formed with Gbeta5.

Its function is as follows. Inhibits signal transduction by increasing the GTPase activity of G protein alpha subunits thereby driving them into their inactive GDP-bound form. This Rattus norvegicus (Rat) protein is Regulator of G-protein signaling 11 (Rgs11).